The following is a 460-amino-acid chain: MSTLVNTTRRSIVIAIHQQLRRMSVQKRKDQSATIAVGQMRSTSDKAANLSQVIELVDRAKSQNACMLFLPECCDFVGESRTQTIELSEGLDGELMAQYRELAKCNKIWISLGGVHERNDQKIFNAHVLLNEKGELAAVYRKLHMFDVTTKEVRLRESDTVTPGYCLERPVSTPVGQIGLQICYDLRFAEPAVLLRKLGANLLTYPSAFTYATGKAHWEILLRARAIETQCFVVAAAQIGWHNQKRQSWGHSMIVSPWGNVLADCSEQELDIGTAEVDLSVLQSLYQTMPCFEHRRNDIYALTAYNLRSKEPTQDRPFATNIVDKRTIFYESEHCFAFTNLRCVVKGHVLVSTKRVTPRLCGLDCAEMADMFTTVCLVQRLLEKIYQTTSATVTVQDGAQAGQTVPHVHFHIMPRRLGDFGHNDQIYVKLDERAEEKPPRTIEERIEEAQIYRKFLTDIS.

In terms of domain architecture, CN hydrolase spans 33-279 (ATIAVGQMRS…LDIGTAEVDL (247 aa)). Residues glutamate 72, lysine 142, and cysteine 183 contribute to the active site. The region spanning 315–422 (DRPFATNIVD…MPRRLGDFGH (108 aa)) is the HIT domain. Residues 407–411 (HVHFH) carry the Histidine triad motif motif. The Tele-AMP-histidine intermediate role is filled by histidine 409.

It in the N-terminal section; belongs to the UPF0012 family. Homotetramer. It depends on Mn(2+) as a cofactor.

It catalyses the reaction P(1),P(3)-bis(5'-adenosyl) triphosphate + H2O = AMP + ADP + 2 H(+). In terms of biological role, cleaves A-5'-PPP-5'A to yield AMP and ADP. The sequence is that of Nitrilase and fragile histidine triad fusion protein NitFhit from Drosophila melanogaster (Fruit fly).